A 482-amino-acid chain; its full sequence is tRNA sulfurtransferase (482 aa).

Positions 61–165 constitute a THUMP domain; the sequence is AEVLEILTHT…NDRLNQVLAS (105 aa). ATP contacts are provided by residues 183–184, Lys-265, Gly-287, and Gln-296; that span reads LI. Cys-344 and Cys-456 are joined by a disulfide. The region spanning 404 to 482 is the Rhodanese domain; the sequence is VEEHAIVLDI…GFNNVKVYRP (79 aa). Cys-456 functions as the Cysteine persulfide intermediate in the catalytic mechanism.

The protein belongs to the ThiI family.

The protein localises to the cytoplasm. It catalyses the reaction [ThiI sulfur-carrier protein]-S-sulfanyl-L-cysteine + a uridine in tRNA + 2 reduced [2Fe-2S]-[ferredoxin] + ATP + H(+) = [ThiI sulfur-carrier protein]-L-cysteine + a 4-thiouridine in tRNA + 2 oxidized [2Fe-2S]-[ferredoxin] + AMP + diphosphate. It carries out the reaction [ThiS sulfur-carrier protein]-C-terminal Gly-Gly-AMP + S-sulfanyl-L-cysteinyl-[cysteine desulfurase] + AH2 = [ThiS sulfur-carrier protein]-C-terminal-Gly-aminoethanethioate + L-cysteinyl-[cysteine desulfurase] + A + AMP + 2 H(+). Its pathway is cofactor biosynthesis; thiamine diphosphate biosynthesis. Catalyzes the ATP-dependent transfer of a sulfur to tRNA to produce 4-thiouridine in position 8 of tRNAs, which functions as a near-UV photosensor. Also catalyzes the transfer of sulfur to the sulfur carrier protein ThiS, forming ThiS-thiocarboxylate. This is a step in the synthesis of thiazole, in the thiamine biosynthesis pathway. The sulfur is donated as persulfide by IscS. This is tRNA sulfurtransferase from Vibrio campbellii (strain ATCC BAA-1116).